Reading from the N-terminus, the 70-residue chain is Large ribosomal subunit protein bL31 (70 aa).

Zn(2+)-binding residues include Cys-16, Cys-18, Cys-37, and Cys-40.

The protein belongs to the bacterial ribosomal protein bL31 family. Type A subfamily. Part of the 50S ribosomal subunit. Requires Zn(2+) as cofactor.

Functionally, binds the 23S rRNA. The protein is Large ribosomal subunit protein bL31 of Glaesserella parasuis serovar 5 (strain SH0165) (Haemophilus parasuis).